We begin with the raw amino-acid sequence, 226 residues long: Orotate phosphoribosyltransferase (226 aa).

5-phospho-alpha-D-ribose 1-diphosphate is bound by residues lysine 26, 73-74 (YK), arginine 100, lysine 101, lysine 104, histidine 106, and 128-136 (EDVTTSGKS). Residues threonine 132 and arginine 161 each coordinate orotate.

Belongs to the purine/pyrimidine phosphoribosyltransferase family. PyrE subfamily. In terms of assembly, homodimer. The cofactor is Mg(2+).

The catalysed reaction is orotidine 5'-phosphate + diphosphate = orotate + 5-phospho-alpha-D-ribose 1-diphosphate. The protein operates within pyrimidine metabolism; UMP biosynthesis via de novo pathway; UMP from orotate: step 1/2. Functionally, catalyzes the transfer of a ribosyl phosphate group from 5-phosphoribose 1-diphosphate to orotate, leading to the formation of orotidine monophosphate (OMP). The sequence is that of Orotate phosphoribosyltransferase from Agathobacter rectalis (strain ATCC 33656 / DSM 3377 / JCM 17463 / KCTC 5835 / VPI 0990) (Eubacterium rectale).